We begin with the raw amino-acid sequence, 230 residues long: Large ribosomal subunit protein uL1 (230 aa).

This sequence belongs to the universal ribosomal protein uL1 family. As to quaternary structure, part of the 50S ribosomal subunit.

In terms of biological role, binds directly to 23S rRNA. The L1 stalk is quite mobile in the ribosome, and is involved in E site tRNA release. Protein L1 is also a translational repressor protein, it controls the translation of the L11 operon by binding to its mRNA. In Leptospira borgpetersenii serovar Hardjo-bovis (strain JB197), this protein is Large ribosomal subunit protein uL1.